The chain runs to 359 residues: 5-amino-6-(D-ribitylamino)uracil--L-tyrosine 4-hydroxyphenyl transferase (359 aa).

Residues 45–282 (VTYVVNANIN…TYAISRIFFK (238 aa)) enclose the Radical SAM core domain. Positions 59, 63, and 66 each coordinate [4Fe-4S] cluster.

The protein belongs to the radical SAM superfamily. CofH family. Consists of two subunits, CofG and CofH. [4Fe-4S] cluster serves as cofactor.

The catalysed reaction is 5-amino-6-(D-ribitylamino)uracil + L-tyrosine + S-adenosyl-L-methionine = 5-amino-5-(4-hydroxybenzyl)-6-(D-ribitylimino)-5,6-dihydrouracil + 2-iminoacetate + 5'-deoxyadenosine + L-methionine + H(+). It participates in cofactor biosynthesis; coenzyme F0 biosynthesis. Catalyzes the radical-mediated synthesis of 5-amino-5-(4-hydroxybenzyl)-6-(D-ribitylimino)-5,6-dihydrouracil from 5-amino-6-(D-ribitylamino)uracil and L-tyrosine. In Methanococcus maripaludis (strain C5 / ATCC BAA-1333), this protein is 5-amino-6-(D-ribitylamino)uracil--L-tyrosine 4-hydroxyphenyl transferase.